The chain runs to 116 residues: Large ribosomal subunit protein bL17 (116 aa).

This sequence belongs to the bacterial ribosomal protein bL17 family. As to quaternary structure, part of the 50S ribosomal subunit. Contacts protein L32.

The protein is Large ribosomal subunit protein bL17 of Helicobacter acinonychis (strain Sheeba).